A 408-amino-acid polypeptide reads, in one-letter code: Probable ethanolamine permease EutH (408 aa).

The next 11 membrane-spanning stretches (helical) occupy residues 1 to 21 (MGINEIIMYIMMFFMLIAAVD), 61 to 81 (AMVGMTALAPVLAHVLGPVII), 89 to 109 (ANPSMFAGTLLACDMGGFFLA), 126 to 146 (ILGSMMGPTIVFSIPVALGII), 155 to 175 (ALGVLAGIVTIPIGCIAGGLI), 192 to 212 (FALILMNMIPVLIVAVLVALG), 230 to 250 (FLVALITIGLAAAVVKFLLGW), 274 to 294 (IEVIGSISCVLLGAYPMVLLL), 313 to 333 (NIAAAGMVATLANNIPMFGMM), 342 to 362 (VINCAFAVSAAFALGDHLGFA), and 369 to 389 (MIFPMIVGKLIGGVTAIGVAM).

Belongs to the EutH family.

The protein resides in the cell inner membrane. The enzyme catalyses ethanolamine(in) = ethanolamine(out). It participates in amine and polyamine degradation; ethanolamine degradation. Functionally, probably involved in the diffusion of protonated ethanolamine (EA) into the cell at low pH. At low pH most EA is protonated, and this permease becomes necessary. Contributes to bacterial survival and replication in acidified macrophage vacuoles, but not to bacterial uptake by macrophages. Its function is as follows. Expression of the eut operon allows this bacteria to use ethanolamine (EA) as a carbon, nitrogen and energy source. It relies on cobalamin (vitamin B12) both as a cofactor for the ethanolamine ammonia-lyase (EAL) activity and to induce the operon. EA enhances bacterial survival in macrophages in a concentration-dependent manner, suggesting it is an important nutrient during infection. The polypeptide is Probable ethanolamine permease EutH (Salmonella typhimurium (strain LT2 / SGSC1412 / ATCC 700720)).